A 153-amino-acid chain; its full sequence is UPF0756 membrane protein LSEI_1366 (153 aa).

Transmembrane regions (helical) follow at residues 4–24, 52–72, 85–105, and 115–135; these read WLFLLGILAIAIVGKNKSLII, WGVTVISAAIMVPIATGEIGF, WIAIGCGVLVAVLSAKGVGLL, and LVFGTIIGVVFLKGIAAGPVI.

Belongs to the UPF0756 family.

The protein localises to the cell membrane. This is UPF0756 membrane protein LSEI_1366 from Lacticaseibacillus paracasei (strain ATCC 334 / BCRC 17002 / CCUG 31169 / CIP 107868 / KCTC 3260 / NRRL B-441) (Lactobacillus paracasei).